The chain runs to 156 residues: H/ACA ribonucleoprotein complex subunit 2-like protein (156 aa).

The protein belongs to the eukaryotic ribosomal protein eL8 family. In terms of assembly, component of the small nucleolar ribonucleoprotein particle containing H/ACA-type snoRNAs (H/ACA snoRNPs).

It localises to the nucleus. It is found in the nucleolus. Its function is as follows. Required for ribosome biogenesis. Part of a complex which catalyzes pseudouridylation of rRNA. This involves the isomerization of uridine such that the ribose is subsequently attached to C5, instead of the normal N1. Pseudouridine ('psi') residues may serve to stabilize the conformation of rRNAs. In Arabidopsis thaliana (Mouse-ear cress), this protein is H/ACA ribonucleoprotein complex subunit 2-like protein.